We begin with the raw amino-acid sequence, 55 residues long: Trypsin inhibitor ClTI-1 (55 aa).

Residues 1–55 form the Kazal-like domain; the sequence is SIPPACDKYSRLPGCPRDYSPVCGTDGKTYPNECVLCLSNSEENKNVQIYKSGMC. 3 disulfides stabilise this stretch: cysteine 6–cysteine 37, cysteine 15–cysteine 34, and cysteine 23–cysteine 55.

The protein localises to the secreted. Inhibits trypsin and plasmin. In Gallus gallus (Chicken), this protein is Trypsin inhibitor ClTI-1.